The following is a 185-amino-acid chain: Pap fimbrial major pilin protein (185 aa).

Residues 1 to 22 (MIKSVIAGAVAMAVVSFGVNNA) form the signal peptide. Cysteines 44 and 83 form a disulfide.

It belongs to the fimbrial protein family.

The protein localises to the secreted. The protein resides in the fimbrium. In terms of biological role, polymerizes to form the thick (6.8 nm in diameter) rod of the pilus (also called fimbria). The rod is a right-handed helical cylinder with 3.28 PapA subunits per turn. Pili are polar filaments radiating from the surface of the bacterium to a length of 0.5-1.5 micrometers and numbering 100-300 per cell, and enable bacteria to colonize the epithelium of specific host organs. This Escherichia coli protein is Pap fimbrial major pilin protein (papA).